Reading from the N-terminus, the 132-residue chain is ATP synthase epsilon chain, cyanelle (132 aa).

The protein belongs to the ATPase epsilon chain family. In terms of assembly, F-type ATPases have 2 components, CF(1) - the catalytic core - and CF(0) - the membrane proton channel. CF(1) has five subunits: alpha(3), beta(3), gamma(1), delta(1), epsilon(1). CF(0) has three main subunits: a, b and c.

The protein resides in the plastid. The protein localises to the cyanelle thylakoid membrane. Its function is as follows. Produces ATP from ADP in the presence of a proton gradient across the membrane. The protein is ATP synthase epsilon chain, cyanelle of Cyanophora paradoxa.